A 591-amino-acid polypeptide reads, in one-letter code: Aspartate--tRNA(Asp/Asn) ligase (591 aa).

Glu-176 is a binding site for L-aspartate. Residues 200–203 (QLFK) form an aspartate region. Arg-222 serves as a coordination point for L-aspartate. Residues 222-224 (RDE) and Gln-231 each bind ATP. His-450 provides a ligand contact to L-aspartate. Position 484 (Glu-484) interacts with ATP. Residue Arg-491 coordinates L-aspartate. 536-539 (GLDR) is an ATP binding site.

The protein belongs to the class-II aminoacyl-tRNA synthetase family. Type 1 subfamily. As to quaternary structure, homodimer.

The protein resides in the cytoplasm. The enzyme catalyses tRNA(Asx) + L-aspartate + ATP = L-aspartyl-tRNA(Asx) + AMP + diphosphate. Aspartyl-tRNA synthetase with relaxed tRNA specificity since it is able to aspartylate not only its cognate tRNA(Asp) but also tRNA(Asn). Reaction proceeds in two steps: L-aspartate is first activated by ATP to form Asp-AMP and then transferred to the acceptor end of tRNA(Asp/Asn). This is Aspartate--tRNA(Asp/Asn) ligase from Bacillus cereus (strain AH187).